The chain runs to 188 residues: Elongation factor P (188 aa).

At Lys34 the chain carries N6-(3,6-diaminohexanoyl)-5-hydroxylysine.

This sequence belongs to the elongation factor P family. Post-translationally, may be beta-lysylated on the epsilon-amino group of Lys-34 by the combined action of EpmA and EpmB, and then hydroxylated on the C5 position of the same residue by EpmC (if this protein is present). Lysylation is critical for the stimulatory effect of EF-P on peptide-bond formation. The lysylation moiety may extend toward the peptidyltransferase center and stabilize the terminal 3-CCA end of the tRNA. Hydroxylation of the C5 position on Lys-34 may allow additional potential stabilizing hydrogen-bond interactions with the P-tRNA.

Its subcellular location is the cytoplasm. Its pathway is protein biosynthesis; polypeptide chain elongation. Involved in peptide bond synthesis. Alleviates ribosome stalling that occurs when 3 or more consecutive Pro residues or the sequence PPG is present in a protein, possibly by augmenting the peptidyl transferase activity of the ribosome. Modification of Lys-34 is required for alleviation. This is Elongation factor P from Methylococcus capsulatus (strain ATCC 33009 / NCIMB 11132 / Bath).